Here is a 520-residue protein sequence, read N- to C-terminus: Protein FAM124A (520 aa).

Disordered regions lie at residues 1–34 (MDRK…ELSV) and 311–334 (FKSG…SQMD). The segment covering 20–32 (SDYSRLSSTSSEL) has biased composition (low complexity).

Belongs to the FAM124 family.

The sequence is that of Protein FAM124A (fam124a) from Xenopus laevis (African clawed frog).